The following is a 450-amino-acid chain: uncharacterized protein (450 aa).

A compositionally biased stretch (basic and acidic residues) spans 141–151 (WLDKTDGEKNS). 3 disordered regions span residues 141 to 171 (WLDKTDGEKNSEASSTDNSLENSTKGADSAG), 276 to 298 (LQDSENVQGDKGEKESKDDAVSQ), and 395 to 416 (DDEDEDNVDNSEGDEESLLSRN). Polar residues predominate over residues 152–171 (EASSTDNSLENSTKGADSAG). Residues 283-298 (QGDKGEKESKDDAVSQ) are compositionally biased toward basic and acidic residues. The span at 395–411 (DDEDEDNVDNSEGDEES) shows a compositional bias: acidic residues.

This is an uncharacterized protein from Saccharomyces cerevisiae (strain ATCC 204508 / S288c) (Baker's yeast).